We begin with the raw amino-acid sequence, 551 residues long: Solute carrier family 22 member 27 (551 aa).

Topologically, residues 1–15 (MSFQELLNQVGSLGR) are cytoplasmic. A helical transmembrane segment spans residues 16-36 (FQILQIVFLLLLNAIVVPHIA). Residues 37–145 (MENFTAAIPN…DLVCESQALN (109 aa)) are Extracellular-facing. N-linked (GlcNAc...) asparagine glycans are attached at residues N39, N56, N62, N102, and N107. A helical membrane pass occupies residues 146-166 (SVTKFSFMIGLFIGGIICGHL). Over 167–173 (SDRLGRK) the chain is Cytoplasmic. A helical membrane pass occupies residues 174 to 194 (FILTCALLQFAITETCVAFAP). The Extracellular portion of the chain corresponds to 195–203 (SFFIYCSLR). A helical transmembrane segment spans residues 204 to 224 (FLAGLSVEPILVNSHLLMLEW). At 225–234 (TSPKFLTMMA) the chain is on the cytoplasmic side. Residues 235–255 (ALLSCAPNIGYMISAGLAFLF) traverse the membrane as a helical segment. The Extracellular segment spans residues 256–258 (RIW). The chain crosses the membrane as a helical span at residues 259-279 (HHLQLTMSVPIFFFLILTRWL). Over 280–348 (SESARWLIVT…LFHTSILRKR (69 aa)) the chain is Cytoplasmic. Residues 349 to 369 (ICVLSFMRLFFTVSIFGLAVH) form a helical membrane-spanning segment. At 370 to 376 (LQHLSSN) the chain is on the extracellular side. Residues 377-397 (IILLQFLISALAILVSVIGPF) traverse the membrane as a helical segment. The Cytoplasmic segment spans residues 398–405 (VLNHIGRR). Residues 406-426 (ITYLVLMSLRGIFILIAVFVP) traverse the membrane as a helical segment. At 427-432 (QEMQTL) the chain is on the extracellular side. Residues 433–453 (RIIMATLAEGISSLCVGVSRL) form a helical membrane-spanning segment. Over 454-467 (HTNELLPTTLRATA) the chain is Cytoplasmic. A helical membrane pass occupies residues 468–488 (VGVIGFFGNSGSFLSPLFMLL). Over 489–494 (ATYYAN) the chain is Extracellular. Residues 495 to 515 (MPWIFYGGFSIFNAFTVFLLP) form a helical membrane-spanning segment. At 516–551 (ETKNQPLPDSTHDVGNDWKESRKGKKEDPIIKVTRF) the chain is on the cytoplasmic side. Residues 523-551 (PDSTHDVGNDWKESRKGKKEDPIIKVTRF) are disordered. Residues 525–545 (STHDVGNDWKESRKGKKEDPI) show a composition bias toward basic and acidic residues.

This sequence belongs to the major facilitator (TC 2.A.1) superfamily. Organic cation transporter (TC 2.A.1.19) family. Expressed in proximal kidney tubules, and in liver hepatocytes (at protein level).

The protein localises to the cell membrane. Does not appear to have transporter activity. Its function is as follows. Sodium-independent organic anion transporter which exhibits high specificity for L-carnitine. Can also transport salicylic acid and the drug cimetidine. The protein is Solute carrier family 22 member 27 of Mus musculus (Mouse).